The primary structure comprises 1022 residues: Sodium/potassium-transporting ATPase subunit alpha (1022 aa).

The propeptide occupies Met-1–Ala-5. The disordered stretch occupies residues Met-1 to Glu-34. The Cytoplasmic segment spans residues Ala-6–Pro-87. Ser-16 carries the post-translational modification Phosphoserine; by PKC. Positions Pro-82 to Pro-84 are interaction with phosphoinositide-3 kinase. The helical transmembrane segment at Glu-88–Ala-108 threads the bilayer. Residues Ile-109 to Tyr-131 are Lumenal-facing. The helical transmembrane segment at Leu-132–Ala-152 threads the bilayer. The Cytoplasmic portion of the chain corresponds to Lys-153–Ile-288. The tract at residues Asn-215–Asn-235 is disordered. The chain crosses the membrane as a helical span at residues Glu-289–Ile-308. At Leu-309 to Ala-320 the chain is on the lumenal side. Residues Val-321–Ala-338 traverse the membrane as a helical segment. The Cytoplasmic segment spans residues Thr-339–Leu-771. The 4-aspartylphosphate intermediate role is filled by Asp-376. Residues Asp-716 and Asp-720 each coordinate Mg(2+). Residues Lys-772 to Val-791 traverse the membrane as a helical segment. The Lumenal segment spans residues Phe-792 to Leu-801. A helical membrane pass occupies residues Gly-802 to Ala-822. Topologically, residues Tyr-823–Lys-842 are cytoplasmic. The helical transmembrane segment at Leu-843 to Phe-865 threads the bilayer. The Lumenal segment spans residues Phe-866–Cys-917. The chain crosses the membrane as a helical span at residues His-918–Lys-937. Topologically, residues Thr-938 to Asn-950 are cytoplasmic. At Ser-942 the chain carries Phosphoserine; by PKA. Residues Lys-951–Tyr-969 traverse the membrane as a helical segment. The Lumenal segment spans residues Thr-970–Pro-984. The helical transmembrane segment at Ser-985–Arg-1005 threads the bilayer. Topologically, residues Phe-1006 to Tyr-1022 are cytoplasmic.

The protein belongs to the cation transport ATPase (P-type) (TC 3.A.3) family. Type IIC subfamily. As to quaternary structure, the sodium/potassium-transporting ATPase is composed of a catalytic alpha subunit, an auxiliary non-catalytic beta subunit and an additional regulatory subunit.

The protein localises to the cell membrane. It catalyses the reaction K(+)(out) + Na(+)(in) + ATP + H2O = K(+)(in) + Na(+)(out) + ADP + phosphate + H(+). In terms of biological role, this is the catalytic component of the active enzyme, which catalyzes the hydrolysis of ATP coupled with the exchange of sodium and potassium ions across the plasma membrane. This action creates the electrochemical gradient of sodium and potassium ions, providing the energy for active transport of various nutrients. This chain is Sodium/potassium-transporting ATPase subunit alpha, found in Tetronarce californica (Pacific electric ray).